The following is a 418-amino-acid chain: 3-phosphoshikimate 1-carboxyvinyltransferase (418 aa).

3-phosphoshikimate-binding residues include lysine 26, serine 27, and arginine 31. Lysine 26 is a phosphoenolpyruvate binding site. Glycine 97 and arginine 125 together coordinate phosphoenolpyruvate. Positions 170, 171, 172, 297, 320, and 324 each coordinate 3-phosphoshikimate. Position 172 (glutamine 172) interacts with phosphoenolpyruvate. Aspartate 297 serves as the catalytic Proton acceptor. Positions 328, 375, and 400 each coordinate phosphoenolpyruvate.

It belongs to the EPSP synthase family. Monomer.

Its subcellular location is the cytoplasm. The enzyme catalyses 3-phosphoshikimate + phosphoenolpyruvate = 5-O-(1-carboxyvinyl)-3-phosphoshikimate + phosphate. It functions in the pathway metabolic intermediate biosynthesis; chorismate biosynthesis; chorismate from D-erythrose 4-phosphate and phosphoenolpyruvate: step 6/7. In terms of biological role, catalyzes the transfer of the enolpyruvyl moiety of phosphoenolpyruvate (PEP) to the 5-hydroxyl of shikimate-3-phosphate (S3P) to produce enolpyruvyl shikimate-3-phosphate and inorganic phosphate. This Pseudomonas savastanoi pv. phaseolicola (strain 1448A / Race 6) (Pseudomonas syringae pv. phaseolicola (strain 1448A / Race 6)) protein is 3-phosphoshikimate 1-carboxyvinyltransferase.